Consider the following 492-residue polypeptide: Cytochrome P450 monooxygenase rdc4 (492 aa).

Cysteine 435 lines the heme pocket.

Belongs to the cytochrome P450 family. It depends on heme as a cofactor.

It participates in secondary metabolite biosynthesis. In terms of biological role, cytochrome P450 monooxygenase; part of the gene cluster that mediates the biosynthesis of radicicol, a resorcylic acid lactone (RAL) that irreversibly inhibits the HSP90 molecular chaperone, an important target for cancer chemotherapy. The radicicol cluster encodes only two apparent post-PKS enzymes, a cytochrome P450 monooxygenase (rdc4) and a non-heme halogenase (rdc2) that could introduce the epoxide and the chlorine, respectively. If this cluster includes all the genes required for radicicol biosynthesis, the remaining structural features of radicicol are presumably generated by the PKSs rdc1 and rdc5. The C-2' ketone could arise if the R-PKS rdc5 and NR-PKS rdc1 each carry out four iterations, in contrast to the five iteration-three iteration split for the hypothemycin PKSs. The origin of the cis 5',6' double bond is not known. The radicicol R-PKS rdc5 ER domain may catalyze either double bond isomerization or reduction in the third iteration. The sequence is that of Cytochrome P450 monooxygenase rdc4 from Metacordyceps chlamydosporia (Nematophagous fungus).